The primary structure comprises 361 residues: MTGAPDSTTPQAASVSTEGARAATLHVPVLLDEVLEALAPRPGGRYLDGTVGLGGHSAAIMERIGPDGELCCLDRDTTALGLARQRLAPWGGRVHFFHTRYADFEAALDQLGWDKVDGALIDIGVSSMQIDMADRGFSFHADGPLDMRMDRDGDEAPASRLVNRATVDVLKDIILRYGEDPMAGRIARAIVDARAAGPIETTAQLAAIVDRAYPAKWRATSRNHPATRTFQALRMAVNDELGQLERFLDRILDRLNPGGRLAVITFHSLEDRIVKHRLRDESQGCVCPRSVSRCECGHKARVDVLTRKPVTATDAELARNSRASSAKLRAAQRLAEGQAPRPRRRNKYAPEGRDEPEGGAA.

Residues 54–56, aspartate 74, tyrosine 101, aspartate 122, and glutamine 129 contribute to the S-adenosyl-L-methionine site; that span reads GGH. Residues 318–361 form a disordered region; the sequence is ARNSRASSAKLRAAQRLAEGQAPRPRRRNKYAPEGRDEPEGGAA. Residues 348-361 are compositionally biased toward basic and acidic residues; that stretch reads YAPEGRDEPEGGAA.

This sequence belongs to the methyltransferase superfamily. RsmH family.

Its subcellular location is the cytoplasm. The enzyme catalyses cytidine(1402) in 16S rRNA + S-adenosyl-L-methionine = N(4)-methylcytidine(1402) in 16S rRNA + S-adenosyl-L-homocysteine + H(+). In terms of biological role, specifically methylates the N4 position of cytidine in position 1402 (C1402) of 16S rRNA. The protein is Ribosomal RNA small subunit methyltransferase H of Nitratidesulfovibrio vulgaris (strain DSM 19637 / Miyazaki F) (Desulfovibrio vulgaris).